The primary structure comprises 569 residues: Urease subunit beta (569 aa).

One can recognise a Urease domain in the interval 131–569; it reads GGIDTHIHFI…VSLAQLFSIF (439 aa). The Ni(2+) site is built by His136, His138, and Lys219. Position 219 is an N6-carboxylysine (Lys219). His221 is a binding site for substrate. The Ni(2+) site is built by His248 and His274. The active-site Proton donor is His322. Asp362 contributes to the Ni(2+) binding site.

The protein belongs to the metallo-dependent hydrolases superfamily. Urease alpha subunit family. Heterohexamer of 3 UreA (alpha) and 3 UreB (beta) subunits. Four heterohexamers assemble to form a 16 nm dodecameric complex. Requires Ni cation as cofactor. Post-translationally, carboxylation allows a single lysine to coordinate two nickel ions.

It is found in the cytoplasm. The enzyme catalyses urea + 2 H2O + H(+) = hydrogencarbonate + 2 NH4(+). It functions in the pathway nitrogen metabolism; urea degradation; CO(2) and NH(3) from urea (urease route): step 1/1. Ammonia produced by ureolysis increases the gastric pH thereby providing an environment permissive for colonization of the stomach. This Helicobacter pylori (strain J99 / ATCC 700824) (Campylobacter pylori J99) protein is Urease subunit beta.